The primary structure comprises 276 residues: Ice-binding protein (276 aa).

The signal sequence occupies residues 1 to 24 (MKILKRIPVLAVLLVGLMTNCSND). The short motif at 79–82 (TGIT) is the Ice-binding site motif (T-A/G-X-T/N) 1 element. A disulfide bridge links C107 with C124. 2 short sequence motifs (ice-binding site motif (T-A/G-X-T/N)) span residues 245–248 (TGIN) and 263–266 (TAVT).

It belongs to the ice-binding protein family. As to quaternary structure, monomer.

It localises to the secreted. In terms of biological role, has antifreeze activity for survival in a subzero environment. Binds to the surface of ice crystals and inhibits their growth. Has high thermal hysteresis (TH) activity, which is the ability to lower the freezing point of an aqueous solution below its melting point, and thus the freezing of the cell fluid can be prevented protecting the organism from ice damage. The TH activity of this protein is 2.2 degrees Celsius at 5 uM and 2.5 degrees Celsius at 50 uM. The sequence is that of Ice-binding protein from Flavobacterium frigoris (strain PS1).